The chain runs to 398 residues: Nicotinate phosphoribosyltransferase (398 aa).

Position 221 is a phosphohistidine; by autocatalysis (H221).

The protein belongs to the NAPRTase family. Transiently phosphorylated on a His residue during the reaction cycle. Phosphorylation strongly increases the affinity for substrates and increases the rate of nicotinate D-ribonucleotide production. Dephosphorylation regenerates the low-affinity form of the enzyme, leading to product release.

It carries out the reaction nicotinate + 5-phospho-alpha-D-ribose 1-diphosphate + ATP + H2O = nicotinate beta-D-ribonucleotide + ADP + phosphate + diphosphate. The protein operates within cofactor biosynthesis; NAD(+) biosynthesis; nicotinate D-ribonucleotide from nicotinate: step 1/1. In terms of biological role, catalyzes the synthesis of beta-nicotinate D-ribonucleotide from nicotinate and 5-phospho-D-ribose 1-phosphate at the expense of ATP. This chain is Nicotinate phosphoribosyltransferase, found in Buchnera aphidicola subsp. Schizaphis graminum (strain Sg).